We begin with the raw amino-acid sequence, 27 residues long: Snake venom serine protease Afaacytin alpha/beta/beta' chains (27 aa).

In terms of domain architecture, Peptidase S1 spans 1 to 27; it reads VIGGAECNINEHRSLVLLYXSSSXFGE.

This sequence belongs to the peptidase S1 family. Snake venom subfamily. In terms of assembly, heterodimer of an alpha and a beta chain. Subunit beta is constituted of two disulfide-linked polypeptidic chains, beta and beta'. Calcium appears to be required for structural cohesion of the molecule. In terms of processing, both chains alpha and beta are N-glycosylated. As to expression, expressed by the venom gland.

Its subcellular location is the secreted. Its activity is regulated as follows. Inhibited by diisopropylfluorophosphate (DFP), benzamidine, heparin and hirudin, but not by plasmatic thrombin inhibitors, antithrombin-III and ecotin. Snake venom serine protease that exhibits alpha-fibrinase and beta-fibrinogenase activities. It replaces missing factors VIII (F8) and IX (F9) in deficient plasmas by activating purified human factor X (F10) into factor Xa. It releases serotonin from platelets and induces platelet aggregation in human (but not in rabbit). Has caseinolytic, arginine-esterase and amidase activities. This is Snake venom serine protease Afaacytin alpha/beta/beta' chains from Cerastes cerastes (Horned desert viper).